Reading from the N-terminus, the 325-residue chain is GPI-linked NAD(P)(+)--arginine ADP-ribosyltransferase 1 (325 aa).

A signal peptide spans 1-22 (MKIPAMMSLLLVSVGLRDGVQV). 2 disulfide bridges follow: C53–C272 and C169–C219. N65 is a glycosylation site (N-linked (GlcNAc...) asparagine). Positions 73 to 268 (KVYADGWAQA…IYLRALGKRS (196 aa)) constitute a TR mART core domain. Y117 and R174 together coordinate NAD(+). Residues R174 and S197 contribute to the active site. S228 serves as a coordination point for NAD(+). Residue E235 is part of the active site. N248 carries an N-linked (GlcNAc...) asparagine glycan. Residue S290 is the site of GPI-anchor amidated serine attachment. A propeptide spans 291-325 (APGSISASCSLLLLLLFLVLSALPENPGLQQLTRC) (removed in mature form).

It belongs to the Arg-specific ADP-ribosyltransferase family. As to expression, abundantly expressed in cardiac and skeletal muscle. Low levels also found in lung.

It localises to the sarcoplasmic reticulum membrane. The enzyme catalyses L-arginyl-[protein] + NAD(+) = N(omega)-(ADP-D-ribosyl)-L-arginyl-[protein] + nicotinamide + H(+). Has ADP-ribosyltransferase activity toward GLP1R. This chain is GPI-linked NAD(P)(+)--arginine ADP-ribosyltransferase 1 (Art1), found in Mus musculus (Mouse).